A 178-amino-acid chain; its full sequence is ATP synthase subunit delta (178 aa).

This sequence belongs to the ATPase delta chain family. As to quaternary structure, F-type ATPases have 2 components, F(1) - the catalytic core - and F(0) - the membrane proton channel. F(1) has five subunits: alpha(3), beta(3), gamma(1), delta(1), epsilon(1). F(0) has three main subunits: a(1), b(2) and c(10-14). The alpha and beta chains form an alternating ring which encloses part of the gamma chain. F(1) is attached to F(0) by a central stalk formed by the gamma and epsilon chains, while a peripheral stalk is formed by the delta and b chains.

The protein localises to the cell membrane. Functionally, f(1)F(0) ATP synthase produces ATP from ADP in the presence of a proton or sodium gradient. F-type ATPases consist of two structural domains, F(1) containing the extramembraneous catalytic core and F(0) containing the membrane proton channel, linked together by a central stalk and a peripheral stalk. During catalysis, ATP synthesis in the catalytic domain of F(1) is coupled via a rotary mechanism of the central stalk subunits to proton translocation. In terms of biological role, this protein is part of the stalk that links CF(0) to CF(1). It either transmits conformational changes from CF(0) to CF(1) or is implicated in proton conduction. This Streptococcus equi subsp. zooepidemicus (strain MGCS10565) protein is ATP synthase subunit delta.